We begin with the raw amino-acid sequence, 599 residues long: Nucleolar protein dnt1 (599 aa).

The residue at position 174 (Ser174) is a Phosphoserine. Disordered regions lie at residues 210-262 (TQEE…PSRL) and 292-599 (DKSL…AALV). Over residues 218 to 241 (QSFNSSLTPSQPTTYNRANFFSIN) the composition is skewed to polar residues. Residues 242-251 (DASSDSSSDA) are compositionally biased toward low complexity. Positions 292–303 (DKSLRSSTREVS) are enriched in basic and acidic residues. Ser306 is subject to Phosphoserine. Positions 307–320 (PNEDSVNDDSSSDV) are enriched in acidic residues. Residues 321 to 333 (SDEKETEAKHEIR) are compositionally biased toward basic and acidic residues. The segment covering 344-354 (SHPSTAVPSEN) has biased composition (polar residues). Over residues 364–380 (LSESSTTSISSSPSENS) the composition is skewed to low complexity. The segment covering 390–401 (DSPNKSLVNDNV) has biased composition (polar residues). A compositionally biased stretch (basic and acidic residues) spans 402–413 (SAKHDKESENGK). A compositionally biased stretch (polar residues) spans 421-431 (QTLVTTSTISA). Residues 436 to 452 (PSDEIGSENDSDSDSDS) are compositionally biased toward acidic residues. Residues 456 to 480 (VPLSQLQKKSQQRNSVSHEIQNRGT) are compositionally biased toward polar residues. The segment covering 483-500 (SPKEPKAKPSTERPETHR) has biased composition (basic and acidic residues). Positions 501-514 (TLSYSRLSELSKTF) are enriched in polar residues. Thr513 carries the phosphothreonine modification. Composition is skewed to basic and acidic residues over residues 533 to 542 (ESKEEGRSDE) and 558 to 574 (NSEKEDRSNPIPVEKRA).

Phosphorylated by clp1.

Its subcellular location is the cytoplasm. It is found in the nucleus. The protein localises to the nucleolus. It localises to the cytoskeleton. The protein resides in the spindle. Negatively regulates the septation initiation network (SIN) pathway, independently of the cdc14 phosphatase clp1. May also have a role in silencing rDNA transcription. Required for maintaining the exclusive nucleolus localization of nuc1. The sequence is that of Nucleolar protein dnt1 (dnt1) from Schizosaccharomyces pombe (strain 972 / ATCC 24843) (Fission yeast).